The following is a 188-amino-acid chain: Translocon-associated protein subunit beta (188 aa).

A signal peptide spans 1-15 (MKFSLFALLFVVVSC). Residues 16–151 (VDVGTQTRDA…EYDRRFAPKY (136 aa)) are Lumenal-facing. N-linked (GlcNAc...) asparagine glycans are attached at residues Asn-93 and Asn-109. The helical transmembrane segment at 152–172 (TYFLVFFLIVAPTTLGSFLLF) threads the bilayer. The Cytoplasmic portion of the chain corresponds to 173–188 (QQSKARFPNVIKKKST).

It belongs to the TRAP-beta family. Heterotetramer of TRAP-alpha, TRAP-beta, TRAP-delta and TRAP-gamma.

Its subcellular location is the endoplasmic reticulum membrane. TRAP proteins are part of a complex whose function is to bind calcium to the ER membrane and thereby regulate the retention of ER resident proteins. The polypeptide is Translocon-associated protein subunit beta (Caenorhabditis elegans).